A 707-amino-acid chain; its full sequence is Drebrin (707 aa).

Residue Ala2 is modified to N-acetylalanine. The ADF-H domain maps to 3–134 (GVSFSGHRLE…DAGAIGQRLS (132 aa)). Residues Ser141 and Ser142 each carry the phosphoserine modification. Residues 209–236 (ERMEQERQEQEERERRYREREQQIEEHR) show a composition bias toward basic and acidic residues. 5 disordered regions span residues 209–438 (ERME…VCKE), 452–497 (AEEP…TSVA), 531–557 (WPGNGEEASTPQAEPRVPTPPSGAEAS), 582–609 (LLNFDELPEPPATFCDPEEEAEGEPLAA), and 630–707 (LEPE…EGGD). Ser241 carries the post-translational modification Phosphoserine. Over residues 288 to 298 (DNPREFFRQQE) the composition is skewed to basic and acidic residues. Residues 329–343 (SDSGPSSSSSSSSSP) are compositionally biased toward low complexity. Ser342 is subject to Phosphoserine. Residues 355 to 364 (RTPNLSSSLP) are compositionally biased toward polar residues. Phosphothreonine occurs at positions 377 and 381. Over residues 380 to 395 (PTRSPSDSSTASTPIT) the composition is skewed to polar residues. Ser383, Ser385, and Ser391 each carry phosphoserine. A Phosphothreonine modification is found at Thr392. A compositionally biased stretch (pro residues) spans 409–420 (QPPPPPPPPPPA). A compositionally biased stretch (basic and acidic residues) spans 428–438 (PRLDGEEVCKE). Position 467 is a phosphoserine (Ser467). Thr549 carries the post-translational modification Phosphothreonine. A compositionally biased stretch (polar residues) spans 639-652 (NGETTQKEGTQQAS). Ser659 carries the post-translational modification Phosphoserine. A compositionally biased stretch (acidic residues) spans 695–707 (PVPEEEEGFEGGD).

Interacts with RUFY. Interacts with CXCR4; this interaction is enhanced by antigenic stimulation. Interacts (via ADF-H domain) with ZMYND8 (via N-terminus); the interaction leads to sequestering of ZMYND8 in the cytoplasm. In terms of processing, ISGylated. Brain neurons.

The protein resides in the cytoplasm. Its subcellular location is the cell projection. It is found in the dendrite. It localises to the cell cortex. The protein localises to the cell junction. The protein resides in the growth cone. Its function is as follows. Actin cytoskeleton-organizing protein that plays a role in the formation of cell projections. Required for actin polymerization at immunological synapses (IS) and for the recruitment of the chemokine receptor CXCR4 to IS. Plays a role in dendritic spine morphogenesis and organization, including the localization of the dopamine receptor DRD1 to the dendritic spines. Involved in memory-related synaptic plasticity in the hippocampus. The chain is Drebrin (Dbn1) from Rattus norvegicus (Rat).